We begin with the raw amino-acid sequence, 105 residues long: Transcription factor S (105 aa).

Residues Cys5, Cys8, Cys21, Cys24, Cys66, Cys69, Cys94, and Cys97 each coordinate Zn(2+). Residues 5-24 (CPKCNNIMLPKNGRLKCTVC) form a C4-type zinc finger. The TFIIS-type zinc-finger motif lies at 62–102 (TRIECPSCGNMEASWWLQQTRCADEPETRFYKCKKCGHTWR).

Belongs to the archaeal RpoM/eukaryotic RPA12/RPB9/RPC11 RNA polymerase family.

Induces RNA cleavage activity in the RNA polymerase. In its presence, the cleavage activity of the RNA polymerase truncates the RNA back to position +15 in a stepwise manner by releasing mainly dinucleotides from the 3'-end of the nascent RNA. The truncated RNAs are able to continue elongation. Involved in transcriptional proofreading and fidelity. Misincorporation of nucleotides during elongation of transcription leads to arrested elongation complexes which are rescued by TFS-promoted removal of a dinucleotide from the 3'-end. TFS is able to induce a cleavage resynthesis cycle in stalled elongation complexes (resulting from the next missing nucleotide or a reduced incorporation rate of a wrong nucleotide) preventing misincorporation and enabling proofreading in a post-incorporation manner. Pausing of elongation complexes is the main determinant of TFS-induced RNA cleavage. This is Transcription factor S from Methanothermococcus thermolithotrophicus (Methanococcus thermolithotrophicus).